Here is an 863-residue protein sequence, read N- to C-terminus: NACHT, LRR and PYD domains-containing protein 4B (863 aa).

The region spanning 1–93 (MASLFSDFGF…TNRATGEIAA (93 aa)) is the Pyrin domain. Residues 143-466 (KMVVLQGVAG…FYLLHSEMDH (324 aa)) enclose the NACHT domain. ATP is bound at residue 149–156 (GVAGIGKT). LRR repeat units lie at residues 618–643 (WHQI…IFNE), 683–706 (SYNL…MLCD), 717–740 (ILDL…LRQN), 741–763 (KSLR…ALCR), 765–782 (LTLP…ACQL), 797–824 (YKCL…AMKD), and 843–863 (SQEF…ENGV).

This sequence belongs to the NLRP family.

Functionally, may be involved in inflammation and recognition of cytosolic pathogen-associated molecular patterns (PAMPs) not intercepted by membrane-bound receptors. This Mus musculus (Mouse) protein is NACHT, LRR and PYD domains-containing protein 4B (Nlrp4b).